We begin with the raw amino-acid sequence, 562 residues long: Phosphoglucomutase-1 (562 aa).

At methionine 1 the chain carries N-acetylmethionine. An N6-acetyllysine modification is found at lysine 16. Arginine 23 is a binding site for alpha-D-glucose 1,6-bisphosphate. Threonine 115 bears the Phosphothreonine mark. Residue serine 117 participates in alpha-D-glucose 1,6-bisphosphate binding. Catalysis depends on serine 117, which acts as the Phosphoserine intermediate. Serine 117 is a Mg(2+) binding site. Phosphoserine occurs at positions 117 and 134. The residue at position 185 (threonine 185) is a Phosphothreonine. A phosphoserine mark is found at serine 206 and serine 213. Residues aspartate 288, aspartate 290, and aspartate 292 each coordinate Mg(2+). Residues aspartate 292 and arginine 293 each contribute to the alpha-D-glucose 1,6-bisphosphate site. N6-acetyllysine is present on lysine 349. Position 353 is a phosphotyrosine (tyrosine 353). Threonine 357 lines the alpha-D-glucose 1,6-bisphosphate pocket. Serine 369 carries the post-translational modification Phosphoserine. Alpha-D-glucose 1,6-bisphosphate is bound by residues glutamate 376, serine 378, and lysine 389. A Phosphoserine modification is found at serine 378. Lysine 419 carries the N6-succinyllysine modification. Threonine 467 is subject to Phosphothreonine; by PAK1. A phosphoserine mark is found at serine 477, serine 485, and serine 505. Threonine 507 carries the post-translational modification Phosphothreonine. Phosphoserine is present on residues serine 509 and serine 541.

It belongs to the phosphohexose mutase family. As to quaternary structure, monomer. Requires Mg(2+) as cofactor. In terms of processing, phosphorylation at Thr-467 by PAK1 significantly enhances enzymatic activity.

The protein localises to the cytoplasm. It catalyses the reaction alpha-D-glucose 1-phosphate = alpha-D-glucose 6-phosphate. The enzyme catalyses O-phospho-L-seryl-[protein] + alpha-D-glucose 1-phosphate = alpha-D-glucose 1,6-bisphosphate + L-seryl-[protein]. The catalysed reaction is alpha-D-glucose 1,6-bisphosphate + L-seryl-[protein] = O-phospho-L-seryl-[protein] + alpha-D-glucose 6-phosphate. Functionally, catalyzes the reversible isomerization of alpha-D-glucose 1-phosphate to alpha-D-glucose 6-phosphate. The mechanism proceeds via the intermediate compound alpha-D-glucose 1,6-bisphosphate. This enzyme participates in both the breakdown and synthesis of glucose. The sequence is that of Phosphoglucomutase-1 (PGM1) from Macaca fascicularis (Crab-eating macaque).